The primary structure comprises 422 residues: MLDARYIRENLETVEARLKTRGEGVDIALFKELDGRRRELLQQSETLKALRNKVTEEIARLQDKSQAAERKTEMREVSQQIKGIDESLRSVEEELQNFLLTVPNVPNETTPIGKSEEDNVVVRTWGEVPTLSFEPKPHWEIGEGLGILDFERGAKLAGARFTLYRGAGARLERALINYMLDLHTDEHKYIEMLPPFMVNRECMTGTGQLPKFEEDLFHMEGVDFFLIPTAEVPVTNIHRGEILKGSDLPISYVAYTPCFRKEAGSYGKDTRGLIRQHQFNKVELVKFTSPEDSYQQLQKLLGHAEEVLRRLQIPYRVVELCTGDIGFSAAKTFDIEVWLPGQNCYREISSCSCFEDFQARRAGIRFRPEEKAKPEFVHTLNGSGLAVGRTLVAVLENYQQADGSVLIPEVLRPYMGGAERIS.

An L-serine-binding site is contributed by 229–231 (TAE). 260 to 262 (RKE) is an ATP binding site. An L-serine-binding site is contributed by glutamate 283. 347 to 350 (EISS) provides a ligand contact to ATP. Serine 383 serves as a coordination point for L-serine.

The protein belongs to the class-II aminoacyl-tRNA synthetase family. Type-1 seryl-tRNA synthetase subfamily. As to quaternary structure, homodimer. The tRNA molecule binds across the dimer.

The protein resides in the cytoplasm. It catalyses the reaction tRNA(Ser) + L-serine + ATP = L-seryl-tRNA(Ser) + AMP + diphosphate + H(+). The catalysed reaction is tRNA(Sec) + L-serine + ATP = L-seryl-tRNA(Sec) + AMP + diphosphate + H(+). It participates in aminoacyl-tRNA biosynthesis; selenocysteinyl-tRNA(Sec) biosynthesis; L-seryl-tRNA(Sec) from L-serine and tRNA(Sec): step 1/1. Catalyzes the attachment of serine to tRNA(Ser). Is also able to aminoacylate tRNA(Sec) with serine, to form the misacylated tRNA L-seryl-tRNA(Sec), which will be further converted into selenocysteinyl-tRNA(Sec). This chain is Serine--tRNA ligase, found in Citrifermentans bemidjiense (strain ATCC BAA-1014 / DSM 16622 / JCM 12645 / Bem) (Geobacter bemidjiensis).